A 518-amino-acid chain; its full sequence is uncharacterized protein (518 aa).

It localises to the virion. This is an uncharacterized protein from Acanthamoeba polyphaga (Amoeba).